The sequence spans 291 residues: Acetylglutamate kinase (291 aa).

Substrate is bound by residues 65–66 (GG), Arg87, and Asn186.

This sequence belongs to the acetylglutamate kinase family. ArgB subfamily.

The protein resides in the cytoplasm. The catalysed reaction is N-acetyl-L-glutamate + ATP = N-acetyl-L-glutamyl 5-phosphate + ADP. It participates in amino-acid biosynthesis; L-arginine biosynthesis; N(2)-acetyl-L-ornithine from L-glutamate: step 2/4. Catalyzes the ATP-dependent phosphorylation of N-acetyl-L-glutamate. This Mycolicibacterium vanbaalenii (strain DSM 7251 / JCM 13017 / BCRC 16820 / KCTC 9966 / NRRL B-24157 / PYR-1) (Mycobacterium vanbaalenii) protein is Acetylglutamate kinase.